Reading from the N-terminus, the 221-residue chain is Phosphatidylserine decarboxylase proenzyme (221 aa).

Residue Ser189 is the Schiff-base intermediate with substrate; via pyruvic acid of the active site. Pyruvic acid (Ser); by autocatalysis is present on Ser189.

The protein belongs to the phosphatidylserine decarboxylase family. PSD-A subfamily. Heterodimer of a large membrane-associated beta subunit and a small pyruvoyl-containing alpha subunit. The cofactor is pyruvate. Is synthesized initially as an inactive proenzyme. Formation of the active enzyme involves a self-maturation process in which the active site pyruvoyl group is generated from an internal serine residue via an autocatalytic post-translational modification. Two non-identical subunits are generated from the proenzyme in this reaction, and the pyruvate is formed at the N-terminus of the alpha chain, which is derived from the carboxyl end of the proenzyme. The post-translation cleavage follows an unusual pathway, termed non-hydrolytic serinolysis, in which the side chain hydroxyl group of the serine supplies its oxygen atom to form the C-terminus of the beta chain, while the remainder of the serine residue undergoes an oxidative deamination to produce ammonia and the pyruvoyl prosthetic group on the alpha chain.

It is found in the cell membrane. It carries out the reaction a 1,2-diacyl-sn-glycero-3-phospho-L-serine + H(+) = a 1,2-diacyl-sn-glycero-3-phosphoethanolamine + CO2. It functions in the pathway phospholipid metabolism; phosphatidylethanolamine biosynthesis; phosphatidylethanolamine from CDP-diacylglycerol: step 2/2. Its function is as follows. Catalyzes the formation of phosphatidylethanolamine (PtdEtn) from phosphatidylserine (PtdSer). This is Phosphatidylserine decarboxylase proenzyme from Porphyromonas gingivalis (strain ATCC 33277 / DSM 20709 / CIP 103683 / JCM 12257 / NCTC 11834 / 2561).